We begin with the raw amino-acid sequence, 287 residues long: Tetraspanning orphan receptor (287 aa).

At 1–27 (MSPSLVSDTQKHERGSHGVKIKHFSPY) the chain is on the extracellular side. A helical transmembrane segment spans residues 28 to 48 (IAVCVTTFSLAFCCFMVHGAI). Topologically, residues 49–55 (TRQPTHL) are cytoplasmic. Residues 56-76 (LPFFFIQVFDLIICLIHILGF) form a helical membrane-spanning segment. The Extracellular portion of the chain corresponds to 77–91 (MSSTSDIRLVIHTKT). Residues 92–114 (GPIYIKSTGLTFIILSISRMMLA) form a helical membrane-spanning segment. Over 115 to 287 (FKAYCLGMVW…NASSNAHSSC (173 aa)) the chain is Cytoplasmic. Residues 165 to 190 (NNSIGNSGSPNEPNTRPRPDTITYDP) are disordered.

As to quaternary structure, interacts (via N-terminal extracellular domain) with human C2a.

It is found in the cell membrane. Its function is as follows. Cell surface receptor that binds to human complement C2a protein. This results in inhibition of the classical and lectin pathways of complement activation, probably due to interference with binding of C2a to C4b and interference with cleavage by C1 or MASP2 such that C3 convertase cannot be formed. This infers resistance to complement-mediated cell lysis, allowing parasite survival and infection. This Trypanosoma cruzi protein is Tetraspanning orphan receptor.